The sequence spans 181 residues: Adenine phosphoribosyltransferase (181 aa).

Belongs to the purine/pyrimidine phosphoribosyltransferase family. In terms of assembly, homodimer.

The protein resides in the cytoplasm. The catalysed reaction is AMP + diphosphate = 5-phospho-alpha-D-ribose 1-diphosphate + adenine. It functions in the pathway purine metabolism; AMP biosynthesis via salvage pathway; AMP from adenine: step 1/1. Catalyzes a salvage reaction resulting in the formation of AMP, that is energically less costly than de novo synthesis. This Methylobacterium nodulans (strain LMG 21967 / CNCM I-2342 / ORS 2060) protein is Adenine phosphoribosyltransferase.